The following is a 743-amino-acid chain: Putative cation exchanger C3A12.06c (743 aa).

13 helical membrane-spanning segments follow: residues L13–S33, F109–S129, L138–A158, I182–L202, F213–H233, I239–F258, L528–G548, L551–Y571, F580–A600, A609–G629, M649–S669, L690–L710, and V718–E738.

Belongs to the Ca(2+):cation antiporter (CaCA) (TC 2.A.19) family.

It localises to the endoplasmic reticulum membrane. Its function is as follows. Putative cation exchanger. The sequence is that of Putative cation exchanger C3A12.06c from Schizosaccharomyces pombe (strain 972 / ATCC 24843) (Fission yeast).